The chain runs to 155 residues: Interleukin-2 (155 aa).

A signal peptide spans methionine 1–glycine 20. Residue threonine 23 is glycosylated (O-linked (GalNAc...) threonine). An intrachain disulfide couples cysteine 79 to cysteine 127.

It belongs to the IL-2 family.

It is found in the secreted. Functionally, cytokine produced by activated CD4-positive helper T-cells and to a lesser extend activated CD8-positive T-cells and natural killer (NK) cells that plays pivotal roles in the immune response and tolerance. Binds to a receptor complex composed of either the high-affinity trimeric IL-2R (IL2RA/CD25, IL2RB/CD122 and IL2RG/CD132) or the low-affinity dimeric IL-2R (IL2RB and IL2RG). Interaction with the receptor leads to oligomerization and conformation changes in the IL-2R subunits resulting in downstream signaling starting with phosphorylation of JAK1 and JAK3. In turn, JAK1 and JAK3 phosphorylate the receptor to form a docking site leading to the phosphorylation of several substrates including STAT5. This process leads to activation of several pathways including STAT, phosphoinositide-3-kinase/PI3K and mitogen-activated protein kinase/MAPK pathways. Functions as a T-cell growth factor and can increase NK-cell cytolytic activity as well. Promotes strong proliferation of activated B-cells and subsequently immunoglobulin production. Plays a pivotal role in regulating the adaptive immune system by controlling the survival and proliferation of regulatory T-cells, which are required for the maintenance of immune tolerance. Moreover, participates in the differentiation and homeostasis of effector T-cell subsets, including Th1, Th2, Th17 as well as memory CD8-positive T-cells. This Boselaphus tragocamelus (Nilgai) protein is Interleukin-2 (IL2).